The sequence spans 481 residues: Halobacterial transducer protein 9 (481 aa).

A PAS domain is found at 10–81; it reads SPFTVPLLLN…NKVADTPIDA (72 aa). Residues 208–444 form the Methyl-accepting transducer domain; that stretch reads DVERLEAASQ…EIAAMVDETA (237 aa).

This sequence belongs to the methyl-accepting chemotaxis (MCP) protein family.

It localises to the cytoplasm. In terms of biological role, potentially involved in chemo- or phototactic signal transduction. This chain is Halobacterial transducer protein 9 (htr9), found in Halobacterium salinarum (strain ATCC 700922 / JCM 11081 / NRC-1) (Halobacterium halobium).